Here is a 338-residue protein sequence, read N- to C-terminus: MLSERRLEVLRAIVQDYVGTEEPVGSKALTERHNLGVSPATVRNDMAALEDEGYIAQPHTSAGRIPTDRGYRLFVDKLAGVKPMTGPERRAIQNFLDGAVDLDDVVGRTVRLLAQLTRQVAVVQYPSLTRSTVRHVELLSLAPARVMLVLITDTGRVEQRMIDCPAPFGETSLADLRARLNSRVAGRRFADVPQLVQDLSEAFDPEDRGTVTTVLSTLLETLVEETEERLMIGGTANLTRFGHDFPLTIRPVLEALEEQVVLLKLLGSAGDSGMTVRIGHENAYEGLNSTSVVSVGYGSGDEAVAKLGVVGPTRMDYPGTMGAVRAVARYVGQILAES.

Belongs to the HrcA family.

Its function is as follows. Negative regulator of class I heat shock genes (grpE-dnaK-dnaJ and groELS operons). Prevents heat-shock induction of these operons. In Streptomyces avermitilis (strain ATCC 31267 / DSM 46492 / JCM 5070 / NBRC 14893 / NCIMB 12804 / NRRL 8165 / MA-4680), this protein is Heat-inducible transcription repressor HrcA.